The following is a 626-amino-acid chain: (R)-linalool synthase 2, chloroplastic (626 aa).

The transit peptide at 1–21 directs the protein to the chloroplast; that stretch reads MAFVSIAPLASRCCVHKSFVS. Mg(2+)-binding residues include D377, D381, and E529. The DDXXD motif signature appears at 377 to 381; it reads DDIYD.

The protein belongs to the terpene synthase family. Tpsd subfamily. Mg(2+) is required as a cofactor. The cofactor is Mn(2+).

It is found in the plastid. The protein resides in the chloroplast. It catalyses the reaction (2E)-geranyl diphosphate + H2O = (R)-linalool + diphosphate. It participates in terpene metabolism; oleoresin biosynthesis. Functionally, terpene synthase (mono-TPS) involved in the biosynthesis of monoterpene natural products included in conifer oleoresin secretions and volatile emissions; these compounds contribute to biotic and abiotic stress defense against herbivores and pathogens. Catalyzes the conversion of (2E)-geranyl diphosphate (GPP) to (R)-linalool. The sequence is that of (R)-linalool synthase 2, chloroplastic from Picea sitchensis (Sitka spruce).